Reading from the N-terminus, the 86-residue chain is UPF0457 protein SAUSA300_2132 (86 aa).

This sequence belongs to the UPF0457 family.

The protein is UPF0457 protein SAUSA300_2132 of Staphylococcus aureus (strain USA300).